The primary structure comprises 193 residues: p53 apoptosis effector related to PMP-22 (193 aa).

4 helical membrane-spanning segments follow: residues arginine 12 to glycine 32, leucine 81 to glycine 101, valine 110 to proline 130, and tryptophan 151 to cysteine 171.

The protein belongs to the TMEM47 family. In terms of tissue distribution, expressed in the stratified squamous skin epithelium of the skin and the tongue, but not in simple epithelia (at protein level). Expressed in the oral epithelium, tongue epithelium and skin (at protein level). More abundant in areas of lower flow stress in the inner curvature compared to the outer curvature regions of the aorta (at protein level). Expressed in luminal cells and myoepithelium cells of the mammary epithelium (at protein level). Expression increases during the early stages of pregnancy before decreasing before birth, expression continues to be weak during involution which mirrors decreased desmosome abundance and organization at these time points (at protein level). Expressed by epithelial cells at the mucosal surface in the proximal colon (at protein level). Expressed in apoptotic cells.

Its subcellular location is the cell junction. The protein resides in the desmosome. It is found in the cell membrane. The protein localises to the cytoplasm. Its function is as follows. Component of intercellular desmosome junctions. Plays a role in stratified epithelial integrity and cell-cell adhesion by promoting desmosome assembly. Thereby plays a role in barrier function of the skin against infection. Plays a role in mammary epithelial tissue homeostasis and remodeling during and after pregnancy, potentially via its involvement in desmosome cell-cell junctions. Required for tooth enamel development via facilitating desmosome-mediated ameloblast adhesion to the stratum intermedium during the transitional stage of amelogenesis. May also play a role in downstream transcriptional regulation of other genes involved in amelogenesis such as AMBN, ENAM, MMP20 and KLK4. Plays a role as an effector in the TP53-dependent apoptotic pathway. Positively regulates apoptosis in T-helper 17 (Th17) cell populations via caspase-dependent signaling. Promotes neutrophil transepithelial migration in response to chemoattractants such as hepoxilin A3 (HXA3), N-Formylmethionyl-leucyl-phenylalanine (fMLP) and CXCL8/IL-8. May act as a positive regulator of endothelial cell apoptosis in response to blood flow-derived shear stress. The polypeptide is p53 apoptosis effector related to PMP-22 (Mus musculus (Mouse)).